We begin with the raw amino-acid sequence, 192 residues long: Signal peptidase complex catalytic subunit SEC11C (192 aa).

Residues 1-28 are Cytoplasmic-facing; the sequence is MVRAGAVGAHLPASGLDIFGDLKKMNKR. A helical; Signal-anchor for type II membrane protein transmembrane segment spans residues 29 to 48; sequence QLYYQVLNFAMIVSSALMIW. Residues 49-192 are Lumenal-facing; that stretch reads KGLIVLTGSE…GAYVLLKRES (144 aa). Catalysis depends on charge relay system residues Ser68, His108, and Asp134. A C-terminal short (CTS) helix region spans residues 177–188; that stretch reads ALLAVMGAYVLL.

Belongs to the peptidase S26B family. Component of the signal peptidase complex paralog C (SPC-C) composed of a catalytic subunit SEC11C and three accessory subunits SPCS1, SPCS2 and SPCS3. Within the complex, interacts with SPCS2 and SPCS3. The complex induces a local thinning of the ER membrane which is used to measure the length of the signal peptide (SP) h-region of protein substrates. This ensures the selectivity of the complex towards h-regions shorter than 18-20 amino acids. May undergo processing at the N-terminus.

The protein localises to the endoplasmic reticulum membrane. The catalysed reaction is Cleavage of hydrophobic, N-terminal signal or leader sequences from secreted and periplasmic proteins.. Catalytic component of the signal peptidase complex (SPC) which catalyzes the cleavage of N-terminal signal sequences from nascent proteins as they are translocated into the lumen of the endoplasmic reticulum. Specifically cleaves N-terminal signal peptides that contain a hydrophobic alpha-helix (h-region) shorter than 18-20 amino acids. This is Signal peptidase complex catalytic subunit SEC11C (SEC11C) from Homo sapiens (Human).